A 233-amino-acid polypeptide reads, in one-letter code: Ribonuclease 3 (233 aa).

The RNase III domain maps to 4–126; sequence LNKLMERLGH…IVGSIYIDAG (123 aa). Residue Glu39 coordinates Mg(2+). Residue Asp43 is part of the active site. Residues Asp112 and Glu115 each coordinate Mg(2+). Glu115 is a catalytic residue. A DRBM domain is found at 153–222; sequence DAKSLLQEWL…AKRFLELLDD (70 aa).

The protein belongs to the ribonuclease III family. Homodimer. Mg(2+) is required as a cofactor.

The protein localises to the cytoplasm. It carries out the reaction Endonucleolytic cleavage to 5'-phosphomonoester.. Its function is as follows. Digests double-stranded RNA. Involved in the processing of primary rRNA transcript to yield the immediate precursors to the large and small rRNAs (23S and 16S). Processes some mRNAs, and tRNAs when they are encoded in the rRNA operon. Processes pre-crRNA and tracrRNA of type II CRISPR loci if present in the organism. In Coxiella burnetii (strain CbuG_Q212) (Coxiella burnetii (strain Q212)), this protein is Ribonuclease 3.